Consider the following 1018-residue polypeptide: MKNNLRYGIRKHKLGAASVFLGTMIVVGMGQDKEAAASEQKTTTVEENGNSATDNKTSETQTTATNVNHIEETQSYNATVTEQPSNATQVTTEEAPKAVQAPQTAQPANIETVKEEVVKEEAKPQVKETTQSQDNSGDQRQVDLTPKKATQNQVAETQVEVAQPRTASESKPRVTRSADVAEAKEASNAKVETGTDVTSKVTVEIGSIEGHNNTNKVEPHAGQRAVLKYKLKFENGLHQGDYFDFTLSNNVNTHGVSTARKVPEIKNGSVVMATGEVLEGGKIRYTFTNDIEDKVDVTAELEINLFIDPKTVQTNGNQTITSTLNEEQTSKELDVKYKDGIGNYYANLNGSIETFNKANNRFSHVAFIKPNNGKTTSVTVTGTLMKGSNQNGNQPKVRIFEYLGNNEDIAKSVYANTTDTSKFKEVTSNMSGNLNLQNNGSYSLNIENLDKTYVVHYDGEYLNGTDEVDFRTQMVGHPEQLYKYYYDRGYTLTWDNGLVLYSNKANGNEKNGPIIQNNKFEYKEDTIKETLTGQYDKNLVTTVEEEYDSSTLDIDYHTAIDGGGGYVDGYIETIEETDSSAIDIDYHTAVDSEAGHVGGYTESSEESNPIDFEESTHENSKHHADVVEYEEDTNPGGGQVTTESNLVEFDEESTKGIVTGAVSDHTTVEDTKEYTTESNLIELVDELPEEHGQAQGPVEEITKNNHHISHSGLGTENGHGNYDVIEEIEENSHVDIKSELGYEGGQNSGNQSFEEDTEEDKPKYEQGGNIVDIDFDSVPQIHGQNKGNQSFEEDTEKDKPKYEHGGNIIDIDFDSVPHIHGFNKHTEIIEEDTNKDKPSYQFGGHNSVDFEEDTLPKVSGQNEGQQTIEEDTTPPIVPPTPPTPEVPSEPETPTPPTPEVPSEPETPTPPTPEVPSEPETPTPPTPEVPAEPGKPVPPAKEEPKKPSKPVEQGKVVTPVIEINEKVKAVAPTKKPQSKKSELPETGGEESTNKGMLFGGLFSILGLALLRRNKKNHKA.

The N-terminal stretch at 1 to 36 (MKNNLRYGIRKHKLGAASVFLGTMIVVGMGQDKEAA) is a signal peptide. Residues 7–18 (YGIRKHKLGAAS) carry the YSIRK-G/S signaling motif motif. The interval 37 to 511 (ASEQKTTTVE…SNKANGNEKN (475 aa)) is ligand-binding A region. Disordered regions lie at residues 38-61 (SEQK…SETQ) and 78-195 (ATVT…ETGT). Composition is skewed to polar residues over residues 39–61 (EQKT…SETQ) and 78–92 (ATVT…QVTT). Basic and acidic residues predominate over residues 112 to 126 (TVKEEVVKEEAKPQV). The segment covering 129–139 (TTQSQDNSGDQ) has biased composition (polar residues). Positions 194–511 (GTDVTSKVTV…SNKANGNEKN (318 aa)) are fibrinogen/elastin/tropoelastin-binding. Positions 512 to 872 (GPIIQNNKFE…EGQQTIEEDT (361 aa)) are fibronectin-binding. A B-1 repeat occupies 545–574 (EEYDSSTLDIDYHTAIDGGGGYVDGYIETI). The 2 X approximate tandem repeats stretch occupies residues 545–604 (EEYDSSTLDIDYHTAIDGGGGYVDGYIETIEETDSSAIDIDYHTAVDSEAGHVGGYTESS). One copy of the B-2 repeat lies at 575–604 (EETDSSAIDIDYHTAVDSEAGHVGGYTESS). Disordered stretches follow at residues 595–622 (GHVG…NSKH), 740–813 (LGYE…DIDF), and 827–997 (EIIE…GMLF). The D-1 repeat unit spans residues 745-782 (GQNSGNQSFEEDTEEDKPKYEQGGNIVDIDFDSVPQIH). A 4 X approximate tandem repeats, D-3 repeat has more fibronectin-binding activity region spans residues 745–878 (GQNSGNQSFE…EEDTTPPIVP (134 aa)). One copy of the D-2 repeat lies at 783-820 (GQNKGNQSFEEDTEKDKPKYEHGGNIIDIDFDSVPHIH). Residues 821-859 (GFNKHTEIIEEDTNKDKPSYQFGGHNSVDFEEDTLPKVS) form a D-3 repeat. Positions 827–838 (EIIEEDTNKDKP) are enriched in basic and acidic residues. The stretch at 860 to 878 (GQNEGQQTIEEDTTPPIVP) is one D-4; truncated repeat. The span at 875–938 (PIVPPTPPTP…PAEPGKPVPP (64 aa)) shows a compositional bias: pro residues. WR repeat units lie at residues 879 to 892 (PTPP…EPET), 893 to 906 (PTPP…EPET), 907 to 920 (PTPP…EPET), 921 to 934 (PTPP…EPGK), and 935 to 948 (PVPP…KPSK). The interval 879–948 (PTPPTPEVPS…AKEEPKKPSK (70 aa)) is 5 X tandem repeats, Pro-rich (WR). The LPXTG sorting signal signature appears at 982–986 (LPETG). Threonine 985 bears the Pentaglycyl murein peptidoglycan amidated threonine mark. A propeptide spans 986–1018 (GGEESTNKGMLFGGLFSILGLALLRRNKKNHKA) (removed by sortase).

It localises to the secreted. Its subcellular location is the cell wall. Functionally, possesses multiple, substituting fibronectin (Fn) binding regions, each capable of conferring adherence to both soluble and immobilized forms of Fn. This confers to S.aureus the ability to invade endothelial cells both in vivo and in vitro, without requiring additional factors, although in a slow and inefficient way through actin rearrangements in host cells. This invasion process is mediated by integrin alpha-5/beta-1. Promotes bacterial attachment to both soluble and immobilized forms of fibrinogen (Fg) by means of a unique binding site localized within the 17 C-terminal residues of the gamma-chain of human Fg. Both plasma proteins (Fn and Fg) function as a bridge between bacterium and host cell. Promotes attachment to immobilized elastin peptides in a dose-dependent and saturable manner. Promotes attachment to both full-length and segments of immobilized human tropoelastin at multiple sites in a dose and pH-dependent manner. Promotes adherence to and aggregation of activated platelets independently of other S.aureus surface molecules. Is a critical mediator implicated in the induction of experimental endocarditis in rats with catheter-induced aortic vegetations, promoting both colonization and persistence of the bacterium into the host. The polypeptide is Fibronectin-binding protein A (fnbA) (Staphylococcus aureus (strain NCTC 8325 / PS 47)).